A 483-amino-acid chain; its full sequence is GDP-fucose protein O-fucosyltransferase 4 (483 aa).

Residue Met1 is a topological domain, cytoplasmic. Residues 2-21 (ALCLWLFLVLPICCWCQGAV) traverse the membrane as a helical; Signal-anchor for type II membrane protein segment. At 22–483 (DLGDSGVFQP…RARGLSNDSR (462 aa)) the chain is on the lumenal side. Asn151 and Asn303 each carry an N-linked (GlcNAc...) asparagine glycan. Cys374 and Cys377 are oxidised to a cystine. Residues 387–425 (RKAHRKNPKQNQPPQPKMANSSHMGCPLPSPGYGPVENV) form a disordered region. Residues Asn406, Asn428, Asn456, and Asn480 are each glycosylated (N-linked (GlcNAc...) asparagine).

This sequence belongs to the glycosyltransferase 10 family.

Its subcellular location is the endoplasmic reticulum membrane. It carries out the reaction L-threonyl-[protein] + GDP-beta-L-fucose = 3-O-(alpha-L-fucosyl)-L-threonyl-[protein] + GDP + H(+). The catalysed reaction is L-seryl-[protein] + GDP-beta-L-fucose = 3-O-(alpha-L-fucosyl)-L-seryl-[protein] + GDP + H(+). It participates in protein modification; protein glycosylation. Protein O-fucosyltransferase that specifically catalyzes O-fucosylation of serine or threonine residues in EMI domains of target proteins. Attaches fucose through an O-glycosidic linkage. O-fucosylation of EMI domain-containing proteins may be required for facilitating protein folding and secretion. The polypeptide is GDP-fucose protein O-fucosyltransferase 4 (fut11) (Danio rerio (Zebrafish)).